A 300-amino-acid polypeptide reads, in one-letter code: MKNKTTIRWLKQALVLSSIVNILLLLLIYSTVFRKDIYKLQVFPGHLIAKSARIGKIPEDILERLEAASLADLIILLREERLVFGHPLKLWALSMGIQKYSLDITPMLTHPLTFIKLKSPEQTWLLPDINDQEFSRINQYLHTERFPFSSKGFFRIMARDWEAGIVNEDILYRFCHIPEFLYVRSLLFGAEIEAASVASLARMVIQGGEDLFFSLCCLENLQTAISDQQRRVFLKAYVDRQEPLAALLLLVHDADWVLHEFSDTDLKYFVQLLPKEVSYTKQFLDQVGHSCRQEILSILQ.

Belongs to the chlamydial CPn_0593/CT_474/TC_0759 family.

This is an uncharacterized protein from Chlamydia muridarum (strain MoPn / Nigg).